Here is a 524-residue protein sequence, read N- to C-terminus: Importin subunit alpha-1 (524 aa).

The tract at residues 1-42 is disordered; the sequence is MGDEFRPSHEERSKMYKSNVRDQNEMRRKRREDEVQIRKNRR. The IBB domain maps to 1–59; that stretch reads MGDEFRPSHEERSKMYKSNVRDQNEMRRKRREDEVQIRKNRRDEKFERNRQITVQRSLS.

The protein belongs to the importin alpha family. In terms of assembly, forms a complex with an importin beta subunit. As to expression, adult germline tissues.

The protein localises to the cytoplasm. In terms of biological role, binds specifically and directly to substrates containing either a simple or bipartite NLS motif. Promotes docking of import substrates to the nuclear envelope. Seems to act as a cytosolic receptor for both simple and bipartite NLS motifs. The protein is Importin subunit alpha-1 (ima-1) of Caenorhabditis elegans.